The sequence spans 461 residues: MNTSELETLIRNILSEQLAPAKAEVKGNGIFPSVSEAIDAAHQAFLRYQQCPLKTRSAIINALREELTPHLASLAAESAAETGMGNKEDKFLKNKAALDNTPGIEDLTTTALTGDGGMVLFEYSPFGVIGSVAPSTNPTETIINNSISMLAAGNSVYFSPHPGAKAVSLKLITMIEDIAFRCCGIRNLVVTVTEPTFEATQQMMAHPKIAVLAITGGPGIVAMGMKSGKKVIGAGAGNPPCIVDETADLVKAAEDIINGASFDFNLPCIAEKSLIVVDAVAERLVQQMQSFGAMRLNSEEIDKLRAVCLPEGIANKQLVGKSPATLLEAAGIPVPAKAPRLLIGIVKADDPWVTSEQLMPMLPIVTVSDFDSALTLALKVEEGLHHTAIMHSQNVSRLNLAARTLQTSIFVKNGPSYAGIGVGGEGFTTFTIATPTGEGTTSARTFARSRRCVLTNGFSIR.

A targets protein to the BMC region spans residues 1–18; sequence MNTSELETLIRNILSEQL.

It belongs to the EutE/PduP family. Interacts with PduK, probably with its BMC-containing N-terminus. Interacts with shell proteins PduA and PduJ, interacts with PduQ.

Its subcellular location is the bacterial microcompartment. It catalyses the reaction propanal + NAD(+) + CoA = propanoyl-CoA + NADH + H(+). It functions in the pathway polyol metabolism; 1,2-propanediol degradation. In terms of biological role, a CoA-acylating aldehyde dehydrogenase required for optimal 1,2-propanediol (1,2-PD) degradation. Optimizes growth in the bacterial microcompartment (BMC) dedicated to 1,2-PD degradation by minimizing propionaldehyde toxicity. NAD(+) and NADH are regenerated internally within the Pdu BMC by the PduP and PduQ enzymes, which reduce NAD(+) and oxidize NADH respectively, although there must also be cofactor transport across the BMC. Directly targeted to the BMC. Expression of a cosmid containing the full 21-gene pdu operon in E.coli allows E.coli to grow on 1,2-propanediol (1,2-PD) with the appearance of bacterial microcompartments (BMC) in its cytoplasm. Its function is as follows. The 1,2-PD-specific bacterial microcompartment (BMC) concentrates low levels of 1,2-PD catabolic enzymes, concentrates volatile reaction intermediates thus enhancing pathway flux and keeps the level of toxic, mutagenic propionaldehyde low. The chain is Propanal dehydrogenase (CoA-propanoylating) from Citrobacter freundii.